A 242-amino-acid chain; its full sequence is uncharacterized protein (242 aa).

An NADP(+)-binding site is contributed by threonine 8–glycine 15. Serine 137 lines the substrate pocket. Tyrosine 150 acts as the Proton acceptor in catalysis.

This sequence belongs to the short-chain dehydrogenases/reductases (SDR) family.

This is an uncharacterized protein from Bacillus subtilis (strain 168).